A 286-amino-acid polypeptide reads, in one-letter code: Meteorin-like protein (286 aa).

The signal sequence occupies residues 1–21; the sequence is MLSPFLAYLLSVVLLCRIARS. Intrachain disulfides connect Cys28–Cys51, Cys84–Cys120, Cys165–Cys235, Cys168–Cys259, and Cys178–Cys281.

Belongs to the meteorin family.

It is found in the secreted. Functionally, hormone induced following exercise or cold exposure that promotes energy expenditure. Induced either in the skeletal muscle after exercise or in adipose tissue following cold exposure and is present in the circulation. Able to stimulate energy expenditure associated with the browning of the white fat depots and improves glucose tolerance. The chain is Meteorin-like protein (metrnl) from Danio rerio (Zebrafish).